The following is an 872-amino-acid chain: Leucine--tRNA ligase (872 aa).

Residues 42–52 carry the 'HIGH' region motif; that stretch reads PYPSGKLHMGH. A 'KMSKS' region motif is present at residues 632 to 636; it reads KMSKS. Lys-635 is a binding site for ATP.

This sequence belongs to the class-I aminoacyl-tRNA synthetase family.

Its subcellular location is the cytoplasm. The enzyme catalyses tRNA(Leu) + L-leucine + ATP = L-leucyl-tRNA(Leu) + AMP + diphosphate. The protein is Leucine--tRNA ligase of Chromobacterium violaceum (strain ATCC 12472 / DSM 30191 / JCM 1249 / CCUG 213 / NBRC 12614 / NCIMB 9131 / NCTC 9757 / MK).